A 544-amino-acid chain; its full sequence is Chaperonin GroEL 1 (544 aa).

ATP is bound by residues 30–33 (TLGP), Lys51, 87–91 (DGTTT), Gly415, 481–483 (DAL), and Asp497.

The protein belongs to the chaperonin (HSP60) family. Forms a cylinder of 14 subunits composed of two heptameric rings stacked back-to-back. Interacts with the co-chaperonin GroES.

The protein localises to the cytoplasm. It carries out the reaction ATP + H2O + a folded polypeptide = ADP + phosphate + an unfolded polypeptide.. In terms of biological role, together with its co-chaperonin GroES, plays an essential role in assisting protein folding. The GroEL-GroES system forms a nano-cage that allows encapsulation of the non-native substrate proteins and provides a physical environment optimized to promote and accelerate protein folding. In Chlamydia caviae (strain ATCC VR-813 / DSM 19441 / 03DC25 / GPIC) (Chlamydophila caviae), this protein is Chaperonin GroEL 1.